Here is a 396-residue protein sequence, read N- to C-terminus: Chorismate synthase (396 aa).

NADP(+) contacts are provided by Arg-41 and Arg-47. FMN-binding positions include 130 to 132 (RAS), Gly-298, 313 to 317 (KPIPT), and Arg-339.

Belongs to the chorismate synthase family. Homotetramer. It depends on FMNH2 as a cofactor.

It carries out the reaction 5-O-(1-carboxyvinyl)-3-phosphoshikimate = chorismate + phosphate. The protein operates within metabolic intermediate biosynthesis; chorismate biosynthesis; chorismate from D-erythrose 4-phosphate and phosphoenolpyruvate: step 7/7. Functionally, catalyzes the anti-1,4-elimination of the C-3 phosphate and the C-6 proR hydrogen from 5-enolpyruvylshikimate-3-phosphate (EPSP) to yield chorismate, which is the branch point compound that serves as the starting substrate for the three terminal pathways of aromatic amino acid biosynthesis. This reaction introduces a second double bond into the aromatic ring system. This chain is Chorismate synthase, found in Syntrophomonas wolfei subsp. wolfei (strain DSM 2245B / Goettingen).